The primary structure comprises 326 residues: DNA-directed RNA polymerase subunit alpha (326 aa).

An alpha N-terminal domain (alpha-NTD) region spans residues 1–231 (MQTNLLKPKI…DQLVVFAALE (231 aa)). An alpha C-terminal domain (alpha-CTD) region spans residues 247-326 (VDPMLMRPVD…ESWPPANLEK (80 aa)).

This sequence belongs to the RNA polymerase alpha chain family. As to quaternary structure, homodimer. The RNAP catalytic core consists of 2 alpha, 1 beta, 1 beta' and 1 omega subunit. When a sigma factor is associated with the core the holoenzyme is formed, which can initiate transcription.

The enzyme catalyses RNA(n) + a ribonucleoside 5'-triphosphate = RNA(n+1) + diphosphate. Its function is as follows. DNA-dependent RNA polymerase catalyzes the transcription of DNA into RNA using the four ribonucleoside triphosphates as substrates. This is DNA-directed RNA polymerase subunit alpha from Polynucleobacter necessarius subsp. necessarius (strain STIR1).